Here is a 645-residue protein sequence, read N- to C-terminus: Envelope glycoprotein (645 aa).

The first 33 residues, methionine 1–valine 33, serve as a signal peptide directing secretion. A receptor-binding domain (RBD) region spans residues serine 32–proline 237. The Extracellular portion of the chain corresponds to glutamine 34–leucine 585. N-linked (GlcNAc...) asparagine; by host glycans are attached at residues asparagine 43 and asparagine 58. Disulfide bonds link cysteine 113–cysteine 130 and cysteine 122–cysteine 135. The interval proline 259–glycine 286 is disordered. An N-linked (GlcNAc...) asparagine; by host glycan is attached at asparagine 301. Intrachain disulfides connect cysteine 311/cysteine 314, cysteine 311/cysteine 538, cysteine 341/cysteine 395, cysteine 360/cysteine 372, cysteine 402/cysteine 415, and cysteine 530/cysteine 537. Positions cysteine 311–cysteine 314 match the CXXC motif. Residues asparagine 333 and asparagine 340 are each glycosylated (N-linked (GlcNAc...) asparagine; by host). N-linked (GlcNAc...) asparagine; by host glycans are attached at residues asparagine 373 and asparagine 409. Positions valine 447–valine 467 are fusion peptide. Positions aspartate 490–glutamate 510 form a coiled coil. Residues leucine 513–leucine 529 are immunosuppression. A CX6CC motif is present at residues cysteine 530–cysteine 538. Residues isoleucine 586 to isoleucine 606 traverse the membrane as a helical segment. Residue cysteine 605 is the site of S-palmitoyl cysteine; by host attachment. The Cytoplasmic portion of the chain corresponds to leucine 607–glutamate 640. Positions tyrosine 630–leucine 633 match the YXXL motif; contains endocytosis signal motif.

In terms of assembly, the mature envelope protein (Env) consists of a trimer of SU-TM heterodimers attached by a labile interchain disulfide bond. The activated Env consists of SU monomers and TM trimers. Specific enzymatic cleavages in vivo yield mature proteins. Envelope glycoproteins are synthesized as an inactive precursor that is N-glycosylated and processed likely by host cell furin or by a furin-like protease in the Golgi to yield the mature SU and TM proteins. The cleavage site between SU and TM requires the minimal sequence [KR]-X-[KR]-R. The R-peptide is released from the C-terminus of the cytoplasmic tail of the TM protein upon particle formation as a result of proteolytic cleavage by the viral protease. Cleavage of this peptide is required for TM to become fusogenic. In terms of processing, the CXXC motif is highly conserved across a broad range of retroviral envelope proteins. It is thought to participate in the formation of a labile disulfide bond possibly with the CX6CC motif present in the transmembrane protein. Isomerization of the intersubunit disulfide bond to an SU intrachain disulfide bond is thought to occur upon receptor recognition in order to allow membrane fusion. Post-translationally, the transmembrane protein is palmitoylated. The R-peptide is palmitoylated.

It is found in the virion membrane. It localises to the host cell membrane. Its function is as follows. The surface protein (SU) attaches the virus to the host cell by binding to its receptor. This interaction activates a thiol in a CXXC motif of the C-terminal domain, where the other Cys residue participates in the formation of the intersubunit disulfide. The activated thiol will attack the disulfide and cause its isomerization into a disulfide isomer within the motif. This leads to SU displacement and TM refolding, and is thought to activate its fusogenic potential by unmasking its fusion peptide. Fusion occurs at the host cell plasma membrane. In terms of biological role, the transmembrane protein (TM) acts as a class I viral fusion protein. Under the current model, the protein has at least 3 conformational states: pre-fusion native state, pre-hairpin intermediate state, and post-fusion hairpin state. During viral and target cell membrane fusion, the coiled coil regions (heptad repeats) assume a trimer-of-hairpins structure, positioning the fusion peptide in close proximity to the C-terminal region of the ectodomain. The formation of this structure appears to drive apposition and subsequent fusion of viral and target cell membranes. Membranes fusion leads to delivery of the nucleocapsid into the cytoplasm. In Xenotropic MuLV-related virus (isolate VP42) (XMRV), this protein is Envelope glycoprotein (env).